The primary structure comprises 157 residues: DNA gyrase inhibitor (157 aa).

It belongs to the DNA gyrase inhibitor family. In terms of assembly, interacts with DNA gyrase.

Its subcellular location is the cytoplasm. In terms of biological role, inhibits the supercoiling activity of DNA gyrase. Acts by inhibiting DNA gyrase at an early step, prior to (or at the step of) binding of DNA by the gyrase. It protects cells against toxins that target DNA gyrase, by inhibiting activity of these toxins and reducing the formation of lethal double-strand breaks in the cell. In Citrobacter rodentium (strain ICC168) (Citrobacter freundii biotype 4280), this protein is DNA gyrase inhibitor.